Here is a 626-residue protein sequence, read N- to C-terminus: Anaphase-promoting complex subunit CDC23 (626 aa).

Ser-59 carries the post-translational modification Phosphoserine; by CDC28. 9 TPR repeats span residues 215–248, 295–328, 329–362, 363–396, 397–430, 431–464, 465–498, 499–532, and 536–569; these read ALLY…YSFN, MIKF…FPNF, TFLK…DPYR, LNDL…DRFR, PETC…DKKT, TNAW…CPRD, FKAW…KPWD, RRIW…SQTV, and TSIY…EELL.

Belongs to the APC8/CDC23 family. In terms of assembly, the APC/C is composed of at least 13 subunits that stay tightly associated throughout the cell cycle: APC1, APC2, APC4, APC5, APC9, APC11, CDC16, CDC23, CDC26, CDC27, DOC1, MND2 and SWM1. CDC23 interacts directly with SWM1 and binds the destruction box (D-box) of the substrate cyclin CLB2. In terms of processing, phosphorylated by CDC28, which is required for the early mitotic activity of the APC/C in its CDC20-bound form.

Its subcellular location is the nucleus. The protein resides in the chromosome. The protein localises to the centromere. It is found in the kinetochore. It functions in the pathway protein modification; protein ubiquitination. Functionally, component of the anaphase promoting complex/cyclosome (APC/C), a cell cycle-regulated E3 ubiquitin-protein ligase complex that controls progression through mitosis and the G1 phase of the cell cycle. The APC/C is thought to confer substrate specificity and, in the presence of ubiquitin-conjugating E2 enzymes, it catalyzes the formation of protein-ubiquitin conjugates that are subsequently degraded by the 26S proteasome. In early mitosis, the APC/C is activated by CDC20 and targets securin PDS1, the B-type cyclin CLB5, and other anaphase inhibitory proteins for proteolysis, thereby triggering the separation of sister chromatids at the metaphase-to-anaphase transition. In late mitosis and in G1, degradation of CLB5 allows activation of the APC/C by CDH1, which is needed to destroy CDC20 and the B-type cyclin CLB2 to allow exit from mitosis and creating the low CDK state necessary for cytokinesis and for reforming prereplicative complexes in G1 prior to another round of replication. The polypeptide is Anaphase-promoting complex subunit CDC23 (CDC23) (Saccharomyces cerevisiae (strain ATCC 204508 / S288c) (Baker's yeast)).